The sequence spans 61 residues: uncharacterized protein (61 aa).

The first 28 residues, 1–28 (MHRRARRMPMRPRRSKRVRNRYTMGTFA), serve as a signal peptide directing secretion.

This is an uncharacterized protein from Mycobacterium tuberculosis (strain ATCC 25618 / H37Rv).